The chain runs to 559 residues: Formate--tetrahydrofolate ligase (559 aa).

67–74 (TPAGEGKS) lines the ATP pocket.

It belongs to the formate--tetrahydrofolate ligase family.

The catalysed reaction is (6S)-5,6,7,8-tetrahydrofolate + formate + ATP = (6R)-10-formyltetrahydrofolate + ADP + phosphate. It participates in one-carbon metabolism; tetrahydrofolate interconversion. This Lactobacillus delbrueckii subsp. bulgaricus (strain ATCC BAA-365 / Lb-18) protein is Formate--tetrahydrofolate ligase.